A 338-amino-acid polypeptide reads, in one-letter code: Serine/threonine-protein kinase YabT (338 aa).

A Protein kinase domain is found at 28–286 (YTLRKQLGKG…PIKASPQPAT (259 aa)). Residues 34–42 (LGKGANGIV) and Lys-55 contribute to the ATP site. Residue Asp-148 is the Proton acceptor of the active site. Residues 266-312 (DAGQKAAQRKQPIKASPQPATRQRQQKPRQGKITKTRYTPKQKPAKS) form a disordered region. Residues 289-309 (RQQKPRQGKITKTRYTPKQKP) are compositionally biased toward basic residues.

This sequence belongs to the protein kinase superfamily. Ser/Thr protein kinase family. In terms of processing, autophosphorylated.

It carries out the reaction L-seryl-[protein] + ATP = O-phospho-L-seryl-[protein] + ADP + H(+). The catalysed reaction is L-threonyl-[protein] + ATP = O-phospho-L-threonyl-[protein] + ADP + H(+). Plays a role in the cell's commitment to sporulation; phosphorylates DNA replication initiation-control protein YabA. Deletion of this kinase delays entry into sporulation but does not affect final spore yield. Overexpression decreases biofilm formation; phosphorylation of YabA probably prevents biofilm formation. The polypeptide is Serine/threonine-protein kinase YabT (yabT) (Bacillus subtilis (strain 168)).